The primary structure comprises 140 residues: Large ribosomal subunit protein uL14 (140 aa).

It belongs to the universal ribosomal protein uL14 family. Part of the 50S ribosomal subunit. Forms a cluster with proteins L3 and L24e, part of which may contact the 16S rRNA in 2 intersubunit bridges.

Functionally, binds to 23S rRNA. Forms part of two intersubunit bridges in the 70S ribosome. The sequence is that of Large ribosomal subunit protein uL14 from Staphylothermus marinus (strain ATCC 43588 / DSM 3639 / JCM 9404 / F1).